The following is a 1325-amino-acid chain: SCAN domain-containing protein 3 (1325 aa).

The SCAN box domain maps to 52 to 134 (RQRFRQFCYQ…TLLEDLEREL (83 aa)). The stretch at 246 to 275 (KAKYCQLIKEVKEAKAKAKKESVDYRRLAR) forms a coiled coil. An Integrase catalytic domain is found at 366 to 526 (KSIKEVSSRC…TPCESAFSSE (161 aa)). The stretch at 542 to 568 (ASLHTENELDQADKELENTLRAQYEEN) forms a coiled coil.

Weakly expressed in the lung (at protein level).

The protein localises to the nucleus. This Homo sapiens (Human) protein is SCAN domain-containing protein 3.